The primary structure comprises 257 residues: MDRIIEKLDRGWWVVSHEQKLWLPGGELPHGEAVNFDLVGQHALHIGEWQGESVWMVRQDRRHDMGSLRQVLDQDPGLFQLAGRGIQLAEFYRSHKFCGYCGHPMHASKSEWAMLCSHCRERYYPQIAPCIIVAIRRDDAILLAQHTRHRNGVHTVLAGFVEVGETLEQAVAREVMEESGIRVKNLRYVTSQPWPFPQSLMTAFMADYADGEIVVDKKELLTADWYRYDDLPLLPPPGTVARRLIEDTVAMCRAEFE.

Residue Arg-69 participates in substrate binding. The Zn(2+) site is built by Cys-98 and Cys-101. Glu-111 serves as a coordination point for substrate. Zn(2+) is bound by residues Cys-116 and Cys-119. Tyr-124 lines the substrate pocket. Residues 125–248 (PQIAPCIIVA…TVARRLIEDT (124 aa)) form the Nudix hydrolase domain. A divalent metal cation is bound by residues Ala-158, Glu-174, and Glu-178. The short motif at 159-180 (GFVEVGETLEQAVAREVMEESG) is the Nudix box element. Residue 192–199 (QPWPFPQS) coordinates substrate. Residue Glu-219 participates in a divalent metal cation binding. Ala-241 contacts substrate.

It belongs to the Nudix hydrolase family. NudC subfamily. Homodimer. Mg(2+) is required as a cofactor. It depends on Mn(2+) as a cofactor. The cofactor is Zn(2+).

It catalyses the reaction a 5'-end NAD(+)-phospho-ribonucleoside in mRNA + H2O = a 5'-end phospho-adenosine-phospho-ribonucleoside in mRNA + beta-nicotinamide D-ribonucleotide + 2 H(+). It carries out the reaction NAD(+) + H2O = beta-nicotinamide D-ribonucleotide + AMP + 2 H(+). The enzyme catalyses NADH + H2O = reduced beta-nicotinamide D-ribonucleotide + AMP + 2 H(+). In terms of biological role, mRNA decapping enzyme that specifically removes the nicotinamide adenine dinucleotide (NAD) cap from a subset of mRNAs by hydrolyzing the diphosphate linkage to produce nicotinamide mononucleotide (NMN) and 5' monophosphate mRNA. The NAD-cap is present at the 5'-end of some mRNAs and stabilizes RNA against 5'-processing. Has preference for mRNAs with a 5'-end purine. Catalyzes the hydrolysis of a broad range of dinucleotide pyrophosphates. This Klebsiella pneumoniae subsp. pneumoniae (strain ATCC 700721 / MGH 78578) protein is NAD-capped RNA hydrolase NudC.